Consider the following 427-residue polypeptide: MKLKTNIRHLHGSIRVPGDKSISHRSIIFGSLAEGETKVYDILRGEDVLSTMQVFRDLGVEIEDKDGVITIQGVGMAGLKAPQNALNMGNSGTSIRLISGVLAGADFEVEMFGDDSLSKRPMDRVTLPLKKMGVSISGQTERDLPPLRLKGTKNLRPIHYELPIASAQVKSALMFAALQAKGESVIIEKEYTRNHTEDMLKQFGGHLSVDGKKITVQGPQKLTGQKVVVPGDISSAAFWLVAGLIAPNSRLVLQNVGINETRTGIIDVIRAMGGKLEITEIDPVAKSATLIVESSDLKGTEIGGALIPRLIDELPIIALLATQAQGVTVIKDAEELKVKETDRIQVVADALNSMGADITPTADGMIIKGKSALHGARVNTFGDHRIGMMTAIAALLVADGEVELDRAEAINTSYPSFFDDLESLIHG.

Lys20 is a binding site for phosphoenolpyruvate. 3-phosphoshikimate is bound by residues Ser21 and Arg25. Phosphoenolpyruvate-binding residues include Gly92 and Arg120. Ser166, Ala167, Gln168, Asp312, and Lys339 together coordinate 3-phosphoshikimate. Gln168 is a phosphoenolpyruvate binding site. Asp312 serves as the catalytic Proton acceptor. The phosphoenolpyruvate site is built by Arg343 and Arg385.

In terms of assembly, homotetramer.

The protein resides in the cytoplasm. The catalysed reaction is 3-phosphoshikimate + phosphoenolpyruvate = 5-O-(1-carboxyvinyl)-3-phosphoshikimate + phosphate. Its pathway is metabolic intermediate biosynthesis; chorismate biosynthesis; chorismate from D-erythrose 4-phosphate and phosphoenolpyruvate: step 6/7. With respect to regulation, competitively inhibited by glyphosate. Activated by ammonium, rubidium or potassium ions. Catalyzes the transfer of the enolpyruvyl moiety of phosphoenolpyruvate (PEP) to the 5-hydroxyl of shikimate-3-phosphate (S3P) to produce enolpyruvyl shikimate-3-phosphate and inorganic phosphate. The protein is 3-phosphoshikimate 1-carboxyvinyltransferase of Streptococcus pneumoniae serotype 4 (strain ATCC BAA-334 / TIGR4).